The following is a 382-amino-acid chain: Alkanesulfonate monooxygenase (382 aa).

It belongs to the SsuD family.

The catalysed reaction is an alkanesulfonate + FMNH2 + O2 = an aldehyde + FMN + sulfite + H2O + 2 H(+). In terms of biological role, catalyzes the desulfonation of aliphatic sulfonates. The polypeptide is Alkanesulfonate monooxygenase (Pseudomonas sp).